Here is a 143-residue protein sequence, read N- to C-terminus: Transcription antitermination protein NusB (143 aa).

The protein belongs to the NusB family.

Involved in transcription antitermination. Required for transcription of ribosomal RNA (rRNA) genes. Binds specifically to the boxA antiterminator sequence of the ribosomal RNA (rrn) operons. This Buchnera aphidicola subsp. Acyrthosiphon pisum (strain APS) (Acyrthosiphon pisum symbiotic bacterium) protein is Transcription antitermination protein NusB.